The sequence spans 166 residues: UPF0336 protein Mb0656 (166 aa).

The protein belongs to the UPF0336 family.

The sequence is that of UPF0336 protein Mb0656 from Mycobacterium bovis (strain ATCC BAA-935 / AF2122/97).